The chain runs to 386 residues: Probable copper-dependent oxygenase M1 (386 aa).

The first 22 residues, 1–22, serve as a signal peptide directing secretion; it reads MLRMKKICTAFLTIALCTHVLA. N-linked (GlcNAc...) asparagine glycosylation occurs at N86. The chain crosses the membrane as a helical span at residues 334–354; the sequence is FVVPIAAIAFIALTIGAGYVF.

This sequence belongs to the clz3 oxygenase family.

It is found in the membrane. Its pathway is secondary metabolite biosynthesis. In terms of biological role, probable copper-dependent oxygenase; part of the gene cluster that mediates the biosynthesis of squalestatin S1 (SQS1, also known as zaragozic acid A), a heavily oxidized fungal polyketide that offers potent cholesterol lowering activity by targeting squalene synthase (SS). SQS1 is composed of a 2,8-dioxobicyclic[3.2.1]octane-3,4,5-tricarboxyclic acid core that is connected to two lipophilic polyketide arms. These initial steps feature the priming of an unusual benzoic acid starter unit onto the highly reducing polyketide synthase pks2, followed by oxaloacetate extension and product release to generate a tricarboxylic acid containing product. The phenylalanine ammonia lyase (PAL) M7 and the acyl-CoA ligase M9 are involved in transforming phenylalanine into benzoyl-CoA. The citrate synthase-like protein R3 is involved in connecting the C-alpha-carbons of the hexaketide chain and oxaloacetate to afford the tricarboxylic acid unit. The potential hydrolytic enzymes, M8 and M10, are in close proximity to pks2 and may participate in product release. On the other side, the tetraketide arm is synthesized by a the squalestatin tetraketide synthase pks1 and enzymatically esterified to the core in the last biosynthetic step, by the acetyltransferase M4. The biosynthesis of the tetraketide must involve 3 rounds of chain extension. After the first and second rounds methyl-transfer occurs, and in all rounds of extension the ketoreductase and dehydratase are active. The enoyl reductase and C-MeT of pks1 are not active in the final round of extension. The acetyltransferase M4 appears to have a broad substrate selectivity for its acyl CoA substrate, allowing the in vitro synthesis of novel squalestatins. The biosynthesis of SQS1 requires several oxidative steps likely performed by oxidoreductases M1, R1 and R2. Finally, in support of the identification of the cluster as being responsible for SQS1 production, the cluster contains a gene encoding a putative squalene synthase (SS) R6, suggesting a likely mechanism for self-resistance. The chain is Probable copper-dependent oxygenase M1 from Phoma sp. (strain ATCC 20986 / MF5453).